Here is a 71-residue protein sequence, read N- to C-terminus: Antitoxin ParD2 (71 aa).

In terms of biological role, antitoxin component of a type II toxin-antitoxin (TA) system. This is Antitoxin ParD2 (parD2) from Mycobacterium tuberculosis (strain CDC 1551 / Oshkosh).